Consider the following 330-residue polypeptide: Polyprenal reductase (330 aa).

The Cytoplasmic portion of the chain corresponds to 1–19 (MASWVGTELSALNPLRTLW). A helical membrane pass occupies residues 20–40 (LALAAAFLLALLLQLAPAGLL). The Lumenal portion of the chain corresponds to 41-74 (PNCALFQDLIRYGKTKLSGPRRPAVCRAFDVPKR). A helical membrane pass occupies residues 75-95 (YFSHFYVVSVLWNGFLLWFLS). Over 96–132 (RSLFLGAPFPNWLRALLRTLGSTQFRALEMESKASQM) the chain is Cytoplasmic. The chain crosses the membrane as a helical span at residues 133–153 (LVGELALSAFLVLVFLWVHSV). At 154-168 (RRLFECFYISVFSNA) the chain is on the lumenal side. Residues 169–189 (VMHVVQYCFGLVYYVLVGLTV) traverse the membrane as a helical segment. Residues 190-206 (LSQVPMDDKNVYMLGKN) lie on the Cytoplasmic side of the membrane. The helical transmembrane segment at 207–227 (LLLPARWFHVLGMMMFLWSSA) threads the bilayer. Topologically, residues 228–277 (HQYECHVILSNLRRNKKGAIVHCQHRIPFGDWFEYVSSANYLAELMIYIS) are lumenal. A helical membrane pass occupies residues 278–298 (MAVTFGFHNFTWWLVVAYVFF). The Cytoplasmic segment spans residues 299 to 330 (CQALSAFFNHKFYKSTFVSYPKHRKAFLPFLF).

This sequence belongs to the steroid 5-alpha reductase family. Polyprenal reductase subfamily.

It localises to the endoplasmic reticulum membrane. The catalysed reaction is a di-trans,poly-cis-dolichal + NADP(+) = a di-trans,poly-cis-polyprenal + NADPH + H(+). It catalyses the reaction a 3-oxo-5alpha-steroid + NADP(+) = a 3-oxo-Delta(4)-steroid + NADPH + H(+). It carries out the reaction androst-4-ene-3,17-dione + NADPH + H(+) = 5alpha-androstan-3,17-dione + NADP(+). The enzyme catalyses 17beta-hydroxy-5alpha-androstan-3-one + NADP(+) = testosterone + NADPH + H(+). The protein operates within protein modification; protein glycosylation. In terms of biological role, plays a key role in early steps of protein N-linked glycosylation by being involved in the conversion of polyprenol into dolichol. Acts as a polyprenal reductase that mediates the reduction of polyprenal into dolichal in a NADP-dependent mechanism. Dolichols are required for the synthesis of dolichol-linked monosaccharides and the oligosaccharide precursor used for N-glycosylation. Also able to convert testosterone (T) into 5-alpha-dihydrotestosterone (DHT). The sequence is that of Polyprenal reductase from Mesocricetus auratus (Golden hamster).